The sequence spans 359 residues: Membrane-bound lytic murein transglycosylase C (359 aa).

The N-terminal stretch at 1–16 (MKKYLALALIAPLLIS) is a signal peptide. Cys-17 carries the N-palmitoyl cysteine lipid modification. Residue Cys-17 is the site of S-diacylglycerol cysteine attachment.

Belongs to the transglycosylase Slt family.

It localises to the cell outer membrane. It carries out the reaction Exolytic cleavage of the (1-&gt;4)-beta-glycosidic linkage between N-acetylmuramic acid (MurNAc) and N-acetylglucosamine (GlcNAc) residues in peptidoglycan, from either the reducing or the non-reducing ends of the peptidoglycan chains, with concomitant formation of a 1,6-anhydrobond in the MurNAc residue.. In terms of biological role, murein-degrading enzyme. May play a role in recycling of muropeptides during cell elongation and/or cell division. The polypeptide is Membrane-bound lytic murein transglycosylase C (Escherichia coli (strain SMS-3-5 / SECEC)).